The primary structure comprises 115 residues: NTF2-related export protein 1 (115 aa).

One can recognise an NTF2 domain in the interval tyrosine 7–leucine 115.

The protein resides in the nucleus. Stimulator of protein export for NES-containing proteins. Also plays a role in mRNA nuclear export. The polypeptide is NTF2-related export protein 1 (nxt1) (Schizosaccharomyces pombe (strain 972 / ATCC 24843) (Fission yeast)).